The following is a 383-amino-acid chain: Lipid-A-disaccharide synthase (383 aa).

The protein belongs to the LpxB family.

It catalyses the reaction a lipid X + a UDP-2-N,3-O-bis[(3R)-3-hydroxyacyl]-alpha-D-glucosamine = a lipid A disaccharide + UDP + H(+). It functions in the pathway bacterial outer membrane biogenesis; LPS lipid A biosynthesis. Condensation of UDP-2,3-diacylglucosamine and 2,3-diacylglucosamine-1-phosphate to form lipid A disaccharide, a precursor of lipid A, a phosphorylated glycolipid that anchors the lipopolysaccharide to the outer membrane of the cell. The sequence is that of Lipid-A-disaccharide synthase from Aliivibrio fischeri (strain ATCC 700601 / ES114) (Vibrio fischeri).